The following is a 348-amino-acid chain: Phosphoribosylformylglycinamidine cyclo-ligase (348 aa).

The protein belongs to the AIR synthase family.

The protein localises to the cytoplasm. It catalyses the reaction 2-formamido-N(1)-(5-O-phospho-beta-D-ribosyl)acetamidine + ATP = 5-amino-1-(5-phospho-beta-D-ribosyl)imidazole + ADP + phosphate + H(+). It participates in purine metabolism; IMP biosynthesis via de novo pathway; 5-amino-1-(5-phospho-D-ribosyl)imidazole from N(2)-formyl-N(1)-(5-phospho-D-ribosyl)glycinamide: step 2/2. The chain is Phosphoribosylformylglycinamidine cyclo-ligase from Geotalea daltonii (strain DSM 22248 / JCM 15807 / FRC-32) (Geobacter daltonii).